The sequence spans 356 residues: Phosphate acyltransferase (356 aa).

The protein belongs to the PlsX family. In terms of assembly, homodimer. Probably interacts with PlsY.

The protein localises to the cytoplasm. It carries out the reaction a fatty acyl-[ACP] + phosphate = an acyl phosphate + holo-[ACP]. It functions in the pathway lipid metabolism; phospholipid metabolism. Its function is as follows. Catalyzes the reversible formation of acyl-phosphate (acyl-PO(4)) from acyl-[acyl-carrier-protein] (acyl-ACP). This enzyme utilizes acyl-ACP as fatty acyl donor, but not acyl-CoA. This chain is Phosphate acyltransferase, found in Shigella boydii serotype 4 (strain Sb227).